We begin with the raw amino-acid sequence, 156 residues long: Small ribosomal subunit protein uS7 (156 aa).

This sequence belongs to the universal ribosomal protein uS7 family. As to quaternary structure, part of the 30S ribosomal subunit. Contacts proteins S9 and S11.

In terms of biological role, one of the primary rRNA binding proteins, it binds directly to 16S rRNA where it nucleates assembly of the head domain of the 30S subunit. Is located at the subunit interface close to the decoding center, probably blocks exit of the E-site tRNA. This is Small ribosomal subunit protein uS7 from Shigella dysenteriae serotype 1 (strain Sd197).